We begin with the raw amino-acid sequence, 215 residues long: Nitrate/nitrite response regulator protein NarP (215 aa).

Residues 8-124 (QVMIVDDHPL…VLLEAIRAGA (117 aa)) enclose the Response regulatory domain. A 4-aspartylphosphate modification is found at Asp-59. The region spanning 147-212 (EEDPFSVLTE…AATILFLQQR (66 aa)) is the HTH luxR-type domain. The H-T-H motif DNA-binding region spans 171-190 (NKQIASVLNISEQTVKVHIR).

This protein activates the expression of the nitrate reductase (narGHJI) and formate dehydrogenase-N (fdnGHI) operons and represses the transcription of the fumarate reductase (frdABCD) operon in response to a nitrate/nitrite induction signal transmitted by either the NarX or NarQ proteins. In Escherichia coli (strain K12), this protein is Nitrate/nitrite response regulator protein NarP (narP).